The chain runs to 949 residues: MASISDDGMALSGYLKKLKTMKKKFFVLYEETSHSAARLEYYDSEKKFLQRAEPKRVIYLKNCFNINRRLDTKHRFVIVLSSRDGGFGIVLENENDLRKWLDKLLVLQRNIANSNGTAHSPYDQVWQVVIQKKGISEKVGITGTYHCCLTSKSLTFVCIGPEKTPNGEDRVASIEILLTTIRRCGHASPQCIFYVELGRQSVLGSGDLWMETDNAAVATNMHNTILSAMSAKTESNTNLINVYQNRPDLSHEPMRKRSSSANEASKPINVNVIQNSQNSLEFRSCSSPHNYGFGRERCDSLPTRNGTLSESSNQTYFGSNHGLRSNTISGNRPHSTNKHSNSPTFTMPLRCSESEESSISVEESDDNGSYSHYRLNTRTSETAIPEENIDDFASAEFSKVTEPNESDENYIPMTPINPTDAIHEKEKIDMQRLEDASLHFDFPEHASEKLAKDYDLDSDNQCVRPIRAYSIGNKVEHLKFNKRLGHLNDTGQNPNRVRAYSVGSKSKIPRCDLQRVVLVEDNKHEFVANRSQSSITKEGSGYGTSGNRQKKSTSAPLLSLKNQINSDRMSDLMEIDFSQASNLEKQKFIKNNEIPKYIENVFPKTPRTDSSSLTLHATSQKDIFNGTKLNNTANTSEDGYLEMKPVGNAYTPSSNCLPIKVEKLKLSDYTAPLTTAAPVHDLNKISTYNISAEKWREQTTSEEKKSNSPLNEKPFSLKPTNVENISHDVHSTNNIDCEQVSVQSDKQNNLDDKIVENNNLDIGGHEEKKLVHSISSEDYTQIKDKSNDFTKFNEAGYKILQIKSDSSLISSKLYQKGIHKDNLERSHRLTESVNTIPDNATASSSVTKFNINAKAADSRSTDPSTPQNILQIKDLNFPSRSSSRISQPELHYASLDLPHCSGQNPAKYLKRGSRESPPVSACPEDGNTYAKIDFDQSDSSSSSSNIFNT.

One can recognise a PH domain in the interval 8 to 109 (GMALSGYLKK…WLDKLLVLQR (102 aa)). An IRS-type PTB domain is found at 122–236 (YDQVWQVVIQ…SAMSAKTESN (115 aa)). The interval 247 to 270 (PDLSHEPMRKRSSSANEASKPINV) is disordered. Phosphoserine is present on residues Ser286, Ser287, and Ser342. Over residues 304-345 (RNGTLSESSNQTYFGSNHGLRSNTISGNRPHSTNKHSNSPTF) the composition is skewed to polar residues. The tract at residues 304–373 (RNGTLSESSN…SDDNGSYSHY (70 aa)) is disordered. Tyr410 is modified (phosphotyrosine; by INSR). The YXXM motif 1 signature appears at 410 to 413 (YIPM). Positions 530–556 (RSQSSITKEGSGYGTSGNRQKKSTSAP) are disordered. At Ser554 the chain carries Phosphoserine. Positions 640 to 643 (YLEM) match the YXXM motif 2 motif. The segment covering 696–706 (REQTTSEEKKS) has biased composition (basic and acidic residues). The tract at residues 696 to 718 (REQTTSEEKKSNSPLNEKPFSLK) is disordered. Tyr892 is modified (phosphotyrosine; by INSR). A disordered region spans residues 906–949 (AKYLKRGSRESPPVSACPEDGNTYAKIDFDQSDSSSSSSNIFNT). Phosphoserine occurs at positions 913 and 916. A Phosphotyrosine; by INSR modification is found at Tyr929. Residues 937–949 (SDSSSSSSNIFNT) are compositionally biased toward low complexity.

As to quaternary structure, bindings to phosphatidylinositol 3-kinase and SHP2.

Functionally, activates phosphatidylinositol 3-kinase when bound to the regulatory p85 subunit. May mediate the control of various cellular processes by insulin-like peptides. When phosphorylated by the insulin receptor binds specifically to various cellular proteins containing SH2 domains. Involved in control of cell proliferation, cell size, and body and organ growth throughout development. Also has a role in a signaling pathway controlling the physiological response required to endure periods of low nutrient conditions. Insulin/insulin-like growth factor (IGF) signaling pathway has a role in regulating aging and is necessary in the ovary for vitellogenic maturation. In Drosophila yakuba (Fruit fly), this protein is Insulin receptor substrate 1.